The sequence spans 370 residues: MIPGNDPILLTPGPLTTSLRTREAMLRDWGSWDAAFNRMTHGVCADLLKIVHGENDYVCVPLQGSGTFAVEAALGTLVPRQGCVLVPNNGAYCARLIRILQRMGIAYIELVLREDEPVSAAAVEDAFNRHSRISHVAHVHLETSAGLLNPLDDIAAVCQRHGKSLIVDAMSSFGALPIDLRRGGIDALISASGKCLEGVPGMGFVIMRRSLLEDSEGRSPSLALDLHDQYVYMRKTTQWRFTPPTHVVAALREALDQFGAEGGQPARGARYARNCAALVGAMKALGFEPFLKPEVQAPVIVTFHAPRDPAWHFAAFYAAVREAGYVLYPGKLTQVETFRVGCIGAIDANELLNAAAAIGHALERLGIRVR.

Residue Lys-194 is modified to N6-(pyridoxal phosphate)lysine.

Belongs to the class-V pyridoxal-phosphate-dependent aminotransferase family. PhnW subfamily. As to quaternary structure, homodimer. Requires pyridoxal 5'-phosphate as cofactor.

The enzyme catalyses (2-aminoethyl)phosphonate + pyruvate = phosphonoacetaldehyde + L-alanine. Its function is as follows. Involved in phosphonate degradation. The sequence is that of 2-aminoethylphosphonate--pyruvate transaminase 2 from Paraburkholderia xenovorans (strain LB400).